The sequence spans 182 residues: uncharacterized protein (182 aa).

BNR repeat units follow at residues 58 to 69 (WISFDAGENWET) and 102 to 113 (YITDDRGESWRA).

This is an uncharacterized protein from Saccharomyces cerevisiae (strain ATCC 204508 / S288c) (Baker's yeast).